The chain runs to 360 residues: MTGSKMLFACLALIAFLHPLVHVASAQECTTPNNKAGKCLGIRVCKPLLEMLQTQGHAAADFLRQSVCKYENNNPIVCCPNEESREDRGILVGNEYEPLRPPHCGFSNVSHTRVVGGKPAVLGAWPWIAALGFRYPRNPALEPLWKCGGSLISSRHVLTAAHCAEINELYVVRIGDLNLVRNDDGAHPVQIEIESKIIHPDYISGVTKHDIAILKLVEEVPFSEYVYPICLPVEDNLRNNNFERYYPFVAGWGSLAHHGPGSDDLMEVQVPVISNTECKNSYARFAAAHVTDTVLCAGYTQGGKDACQGDSGGPLMLPKKFTFYQIGVVSYGHKCAAAGYPGVYTRVTSYLDDFILPAMQ.

An N-terminal signal peptide occupies residues 1-26 (MTGSKMLFACLALIAFLHPLVHVASA). The propeptide occupies 27 to 113 (QECTTPNNKA…CGFSNVSHTR (87 aa)). The Clip domain maps to 28-79 (ECTTPNNKAGKCLGIRVCKPLLEMLQTQGHAAADFLRQSVCKYENNNPIVCC). 7 disulfide bridges follow: Cys29/Cys78, Cys39/Cys68, Cys45/Cys79, Cys104/Cys230, Cys147/Cys163, Cys278/Cys296, and Cys307/Cys335. Asn108 carries an N-linked (GlcNAc...) asparagine glycan. Residues 114–360 (VVGGKPAVLG…LDDFILPAMQ (247 aa)) enclose the Peptidase S1 domain. His162 (charge relay system) is an active-site residue. Positions 176, 178, 181, and 184 each coordinate Ca(2+). Residue Asp210 is the Charge relay system of the active site. The active-site Charge relay system is the Ser311.

This sequence belongs to the peptidase S1 family. CLIP subfamily. In terms of tissue distribution, expressed by the venom gland.

It localises to the secreted. Its function is as follows. Multifunctional venom serine protease. In insects, it acts as an arthropod prophenoloxidase-activating factor, thereby triggering the phenoloxidase cascade. When injected into larvae, it induces a lethal melanization response in target insects by modulating the innate immune response. In mammals, it converts fibrinogen into fibrin, activates prothrombin, and also degrades fibrin. In mammal, it may act in a cooperative manner with the serine protease inhibitor Bi-KTI (AC G3LH89) to promote the spread of bee venom under anti-bleeding conditions. This chain is Venom serine protease Bi-VSP, found in Bombus ignitus (Bumblebee).